The chain runs to 1117 residues: WD repeat and HMG-box DNA-binding protein 1 (1117 aa).

WD repeat units follow at residues 11–50, 52–91, 93–131, 134–173, 184–223, 228–267, and 271–310; these read GHTE…DPKS, NVGE…GILT, FTTN…QQQT, GHDA…CAVS, VNAK…NPFD, SISQ…CMER, and EKGY…SGKV. Phosphoserine is present on residues serine 333 and serine 377. A Glycyl lysine isopeptide (Lys-Gly) (interchain with G-Cter in SUMO2) cross-link involves residue lysine 390. The residue at position 664 (lysine 664) is an N6-acetyllysine. The disordered stretch occupies residues 816–885; sequence LAETQSEEEK…NLFQSANSSD (70 aa). Threonine 819 carries the post-translational modification Phosphothreonine. Serine 821 carries the phosphoserine modification. Positions 861-872 are enriched in basic and acidic residues; it reads DTVSEEKPESHN. The span at 873–885 shows a compositional bias: polar residues; the sequence is HGQNLFQSANSSD. 2 positions are modified to phosphoserine: serine 910 and serine 923. The tract at residues 911-1005 is disordered; that stretch reads SKEPAVSANS…AVCLQNSENQ (95 aa). The segment covering 917–943 has biased composition (polar residues); that stretch reads SANSTRSANILDSMNKSSRKSTSLNRM. Residue lysine 953 is modified to N6-acetyllysine. Polar residues predominate over residues 962–974; it reads KQASAASYFQKRT. Residues 975–987 are compositionally biased toward basic and acidic residues; that stretch reads PQADKTEEVKENP. Over residues 988-1004 the composition is skewed to polar residues; the sequence is KSSSSDAPAVCLQNSEN. Positions 1004-1073 form a DNA-binding region, HMG box; the sequence is NQRPKTGFQM…SDGAEAKKRK (70 aa). The residue at position 1030 (serine 1030) is a Phosphoserine. Residues 1054-1074 form a disordered region; the sequence is WTNKAKGETASDGAEAKKRKR. Lysine 1116 is covalently cross-linked (Glycyl lysine isopeptide (Lys-Gly) (interchain with G-Cter in SUMO1); alternate). A Glycyl lysine isopeptide (Lys-Gly) (interchain with G-Cter in SUMO2); alternate cross-link involves residue lysine 1116.

Trimer. Interacts with the polymerase alpha catalytic subunit POLA1. Interacts with MCM10. Interacts with DNA2. Interacts with CDC45 and GINS2 subunit of GINS complex; these interactions associate WDHD1 with the CMG helicase complex.

The protein localises to the nucleus. It is found in the nucleoplasm. Functionally, core replisome component that acts as a replication initiation factor. Binds directly to the CMG complex and functions as a hub to recruit additional proteins to the replication fork. This Mus musculus (Mouse) protein is WD repeat and HMG-box DNA-binding protein 1 (Wdhd1).